Reading from the N-terminus, the 93-residue chain is Phosphocarrier protein HPr (93 aa).

Residues 2–89 (AERRVNVGWA…KLVAEGLEEL (88 aa)) form the HPr domain. Histidine 15 (pros-phosphohistidine intermediate) is an active-site residue.

It belongs to the HPr family.

Its subcellular location is the cytoplasm. Functionally, general (non sugar-specific) component of the phosphoenolpyruvate-dependent sugar phosphotransferase system (sugar PTS). This major carbohydrate active-transport system catalyzes the phosphorylation of incoming sugar substrates concomitantly with their translocation across the cell membrane. The phosphoryl group from phosphoenolpyruvate (PEP) is transferred to the phosphoryl carrier protein HPr by enzyme I. Phospho-HPr then transfers it to the PTS EIIA domain. In Streptomyces coelicolor (strain ATCC BAA-471 / A3(2) / M145), this protein is Phosphocarrier protein HPr (ptsH).